A 338-amino-acid chain; its full sequence is Ornithine carbamoyltransferase (338 aa).

Residues 56 to 59 (STRT), glutamine 83, arginine 107, and 134 to 137 (HPTQ) each bind carbamoyl phosphate. L-ornithine-binding positions include asparagine 168, aspartate 232, and 236–237 (SM). Carbamoyl phosphate is bound by residues 274–275 (CL) and arginine 320.

This sequence belongs to the aspartate/ornithine carbamoyltransferase superfamily. OTCase family.

It is found in the cytoplasm. The catalysed reaction is carbamoyl phosphate + L-ornithine = L-citrulline + phosphate + H(+). It functions in the pathway amino-acid biosynthesis; L-arginine biosynthesis; L-arginine from L-ornithine and carbamoyl phosphate: step 1/3. Its function is as follows. Reversibly catalyzes the transfer of the carbamoyl group from carbamoyl phosphate (CP) to the N(epsilon) atom of ornithine (ORN) to produce L-citrulline. This Photorhabdus laumondii subsp. laumondii (strain DSM 15139 / CIP 105565 / TT01) (Photorhabdus luminescens subsp. laumondii) protein is Ornithine carbamoyltransferase.